The primary structure comprises 176 residues: MNLPGPIHDFLLVFLGLGLILGGLGVVLLTNPIFSAFSLGLVLVCISLFYILSNSHFVAAAQLLIYVGAINVLILFAVMFMNGSEYYKDFNLWTVGNGLTSLICTSLFVLLITIISNTTWYGIIWTTRANQIIEQDLVSNGQQIGIHLSTDFFLPFEFISIILLVALIGAIATARQ.

5 helical membrane passes run 10–30, 32–52, 61–81, 95–115, and 152–172; these read FLLV…VLLT, PIFS…FYIL, AQLL…VMFM, VGNG…ITII, and FFLP…GAIA.

The protein belongs to the complex I subunit 6 family. In terms of assembly, NDH is composed of at least 16 different subunits, 5 of which are encoded in the nucleus.

It localises to the plastid. The protein localises to the chloroplast thylakoid membrane. The enzyme catalyses a plastoquinone + NADH + (n+1) H(+)(in) = a plastoquinol + NAD(+) + n H(+)(out). It carries out the reaction a plastoquinone + NADPH + (n+1) H(+)(in) = a plastoquinol + NADP(+) + n H(+)(out). NDH shuttles electrons from NAD(P)H:plastoquinone, via FMN and iron-sulfur (Fe-S) centers, to quinones in the photosynthetic chain and possibly in a chloroplast respiratory chain. The immediate electron acceptor for the enzyme in this species is believed to be plastoquinone. Couples the redox reaction to proton translocation, and thus conserves the redox energy in a proton gradient. This chain is NAD(P)H-quinone oxidoreductase subunit 6, chloroplastic (ndhG), found in Populus alba (White poplar).